The sequence spans 331 residues: ADP,ATP carrier protein 2, mitochondrial (331 aa).

Solcar repeat units follow at residues 29–122, 134–226, and 238–320; these read KNFA…FKRM, KWFG…LKPV, and ASFA…LQIL. 5 helical membrane-spanning segments follow: residues 31–58, 99–123, 132–152, 202–223, and 237–257; these read FAID…VKLL, TANV…KRMF, YWKW…SSLF, FNIS…YDSL, and FASF…SYPI. Residues arginine 104 and lysine 116 each contribute to the ADP site. Residue arginine 261 participates in ADP binding. The interval 261-266 is important for transport activity; the sequence is RRRMMM. The Nucleotide carrier signature motif motif lies at 261–266; that stretch reads RRRMMM. The chain crosses the membrane as a helical span at residues 297-317; the sequence is AGANILRAIAGAGVLSGYDQL.

Belongs to the mitochondrial carrier (TC 2.A.29) family. As to quaternary structure, monomer.

Its subcellular location is the mitochondrion inner membrane. It catalyses the reaction ADP(in) + ATP(out) = ADP(out) + ATP(in). With respect to regulation, the matrix-open state (m-state) is inhibited by the membrane-permeable bongkrekic acid (BKA). The cytoplasmic-open state (c-state) is inhibited by the membrane-impermeable toxic inhibitor carboxyatractyloside (CATR). ADP:ATP antiporter that mediates import of ADP into the mitochondrial matrix for ATP synthesis, and export of ATP out to fuel the cell. Cycles between the cytoplasmic-open state (c-state) and the matrix-open state (m-state): operates by the alternating access mechanism with a single substrate-binding site intermittently exposed to either the cytosolic (c-state) or matrix (m-state) side of the inner mitochondrial membrane. This chain is ADP,ATP carrier protein 2, mitochondrial (ANT-G2), found in Triticum aestivum (Wheat).